A 271-amino-acid polypeptide reads, in one-letter code: Gasdermin bGSDM (271 aa).

The S-palmitoyl cysteine moiety is linked to residue C7. 4 beta stranded membrane-spanning segments follow: residues 74–90 (IAGT…GLSV), 102–120 (TLGV…FEFS), 168–185 (RINV…GLNL), and 194–210 (ANVK…TVSF).

It belongs to the bacterial gasdermin family. As to quaternary structure, monomer. Forms large, homooligomeric ring-shaped pores when inserted in membranes. In terms of processing, palmitoylation helps stabilize the inactive state; may self palmitoylate. Palmitoylation plays a significant role in pore formation.

The protein resides in the cytoplasm. The protein localises to the cell inner membrane. Its activity is regulated as follows. The full-length protein before cleavage is inactive: intramolecular interactions between the N-terminal domain and the C-terminal region as well as the lipid modification, mediate autoinhibition. The pyroptosis-like-inducing activity is carried by the released N-terminal domain (Gasdermin bGSDM, N-terminus). In terms of biological role, involved in defense against bacteriophages. When this probable 4 gene operon (bGSDM-FE772_23060-FE772_23065-FE772_23070) is inserted into E.coli it provides nearly 100-fold protection against phages T5 and T6 and about 8-fold against phage T4. The operon without bGSDM no longer protects against phage. Cleavage of this precursor by its dedicated protease(s) releases the active moiety (gasdermin bGSDM, N-terminus) which inserts into membranes, forming pores and triggering cell death. Its function is as follows. Pore-forming protein that causes membrane permeabilization via a pyroptosis-like activity. Makes ring-like pores when released. The protein is Gasdermin bGSDM of Lysobacter enzymogenes.